A 385-amino-acid polypeptide reads, in one-letter code: Cellulase CelDZ1 (385 aa).

The chain crosses the membrane as a helical span at residues 6-26 (INKWYFFVGMLVIFAVIISLI). Residues His-87, 91–92 (WF), Tyr-118, and His-153 contribute to the substrate site. Glu-192 serves as the catalytic Proton donor. Tyr-261 lines the substrate pocket. Glu-294 functions as the Nucleophile in the catalytic mechanism. Residues 300-301 (AS), Trp-328, and 333-335 (KNE) each bind substrate.

Belongs to the glycosyl hydrolase 5 (cellulase A) family. As to quaternary structure, monomer.

It localises to the cell membrane. It carries out the reaction Endohydrolysis of (1-&gt;4)-beta-D-glucosidic linkages in cellulose, lichenin and cereal beta-D-glucans.. Activity is enhanced by 1mM Mn(2+), but is not affected by 1mM Ca(2+), Mg(2+), Zn(2+), K(+), Na(+) or Li(+). Activity is not inhibited by EDTA (in vitro). Functionally, thermostable endoglucanase that has high activity with soluble polymeric substrates containing beta-1,4-glycosidic bonds, such as carboxymethyl cellulose (CMC) and barley beta-D-glucan (in vitro). Has no activity with cellobiose and filter paper. Has no activity with substrates containing beta-1,3-linked glycans, such as laminarin. Likewise, lacks activity with xylan, galactomannan and pectin. This chain is Cellulase CelDZ1, found in Thermoanaerobacterium sp.